Here is a 351-residue protein sequence, read N- to C-terminus: Keratocan (351 aa).

A signal peptide spans 1–20 (MATPNCLILWVLLIADTVWT). Positions 34-72 (DWDVHDDFYCPRECFCPPSFPTALYCENRGLTEIPPIPS) constitute an LRRNT domain. Intrachain disulfides connect C43–C49 and C47–C59. 10 LRR repeats span residues 73–94 (RIWYLYLENNLIESIPEKPFEN), 97–118 (QLRWINLNKNKITNYGIEKGAL), 123–143 (KLLFLFLEDNELEEVPSPLPR), 144–165 (SLEQLQLARNKVSRIPQGTFSN), 168–181 (NLTLLDLQHNKLLD), 194–214 (NLMQLNMAKNALRNMPPRLPA), 215–236 (NTMQLFLDNNSIEGIPENYFNV), 239–259 (KVAFLRLNHNKLSDAGLPSRG), 264–283 (SILDLQLSYNQLTNFPRINA), and 284–305 (NLQHLHLDHNKIKNVNMSVICP). N-linked (GlcNAc...) (keratan sulfate) asparagine glycosylation occurs at N94. N168 carries an N-linked (GlcNAc...) (keratan sulfate) asparagine glycan. N-linked (GlcNAc...) asparagine glycosylation occurs at N223. A glycan (N-linked (GlcNAc...) asparagine) is linked at N299. C304 and C342 are joined by a disulfide.

Belongs to the small leucine-rich proteoglycan (SLRP) family. SLRP class II subfamily. Post-translationally, binds keratan sulfate chains. Selectively expressed in cornea of adult where it is detected in keratocytes but not in scleral cells. In embryo, first detected in periocular mesenchymal cells migrating toward developing cornea on 13.5 dpc; expression gradually restricted to corneal stromal cells on 14.5 to 18.5 dpc. Detected in scleral cells of 15.5 dpc but not in 18.5 dpc embryos.

The protein resides in the secreted. The protein localises to the extracellular space. Its subcellular location is the extracellular matrix. Its function is as follows. May be important in developing and maintaining corneal transparency and for the structure of the stromal matrix. The sequence is that of Keratocan (Kera) from Mus musculus (Mouse).